Here is a 180-residue protein sequence, read N- to C-terminus: UPF0149 protein XC_0904 (180 aa).

It belongs to the UPF0149 family.

In Xanthomonas campestris pv. campestris (strain 8004), this protein is UPF0149 protein XC_0904.